The following is a 450-amino-acid chain: Putative receptor-like protein kinase At1g72540 (450 aa).

T73 bears the Phosphothreonine mark. The 282-residue stretch at 84 to 365 folds into the Protein kinase domain; the sequence is FSKYNFLGEG…TVVKTLEPIL (282 aa). Residues 90 to 98 and K119 contribute to the ATP site; that span reads LGEGGFGEV. Position 164 is a phosphotyrosine (Y164). The active-site Proton acceptor is D214. S218 bears the Phosphoserine mark. Position 254 is a phosphothreonine (T254). Y262 carries the phosphotyrosine modification.

Belongs to the protein kinase superfamily. Ser/Thr protein kinase family.

It catalyses the reaction L-seryl-[protein] + ATP = O-phospho-L-seryl-[protein] + ADP + H(+). The enzyme catalyses L-threonyl-[protein] + ATP = O-phospho-L-threonyl-[protein] + ADP + H(+). The protein is Putative receptor-like protein kinase At1g72540 of Arabidopsis thaliana (Mouse-ear cress).